Here is a 286-residue protein sequence, read N- to C-terminus: Translocon-associated protein subunit alpha (286 aa).

Residues 1–20 (MSSLRRLLLLLLLVFPATLL) form the signal peptide. Over 21 to 207 (LRVGPGGSLA…EREDGLDGET (187 aa)) the chain is Lumenal. Residues 37-75 (EDEETVEDSIIEDEDDEAEVEEDEPTDLAEDKEEDDVSG) are compositionally biased toward acidic residues. Residues 37–83 (EDEETVEDSIIEDEDDEAEVEEDEPTDLAEDKEEDDVSGEPEASPSA) are disordered. N-linked (GlcNAc...) asparagine glycans are attached at residues asparagine 136 and asparagine 191. A helical membrane pass occupies residues 208–228 (IFMYMFLAGLGLLVVVGLHQL). At 229-286 (LESRKRKRPIQKVEMGTSSQNDVDMSWIPQETLNQINKASPRRLPRKRAQKRSVGSDE) the chain is on the cytoplasmic side. Serine 247 carries the phosphoserine modification. Position 260 is a phosphothreonine (threonine 260). The interval 261-286 (LNQINKASPRRLPRKRAQKRSVGSDE) is disordered. Serine 268 is modified (phosphoserine). Positions 268 to 279 (SPRRLPRKRAQK) are enriched in basic residues.

Belongs to the TRAP-alpha family. As to quaternary structure, heterotetramer of TRAP-alpha, TRAP-beta, TRAP-delta and TRAP-gamma. Interacts with palmitoylated calnexin (CALX), the interaction is required for efficient folding of glycosylated proteins. Phosphorylated in its cytoplasmic tail.

The protein resides in the endoplasmic reticulum membrane. Functionally, TRAP proteins are part of a complex whose function is to bind calcium to the ER membrane and thereby regulate the retention of ER resident proteins. May be involved in the recycling of the translocation apparatus after completion of the translocation process or may function as a membrane-bound chaperone facilitating folding of translocated proteins. The polypeptide is Translocon-associated protein subunit alpha (SSR1) (Bos taurus (Bovine)).